A 196-amino-acid chain; its full sequence is Protein hunchback (196 aa).

3 disordered regions span residues 16 to 56, 63 to 82, and 156 to 196; these read SHHH…SHTN, LKQQ…QQPM, and LTPP…KYMA. Basic residues predominate over residues 17 to 29; sequence HHHHHHHAHHSHH. Composition is skewed to low complexity over residues 33 to 43 and 65 to 80; these read SNSNASNSPHQ and QQQQ…QQQQ. Over residues 177-196 the composition is skewed to basic and acidic residues; the sequence is EPEKEHDLMSNSSEDMKYMA.

This sequence belongs to the hunchback C2H2-type zinc-finger protein family.

The protein resides in the nucleus. Functionally, gap class segmentation protein that controls development of head structures. The chain is Protein hunchback (hb) from Drosophila adunca (Fruit fly).